The chain runs to 371 residues: Flagellar P-ring protein (371 aa).

The first 25 residues, 1 to 25 (MKMRACKWLLTLAVAFAATLSSAYA), serve as a signal peptide directing secretion.

Belongs to the FlgI family. The basal body constitutes a major portion of the flagellar organelle and consists of four rings (L,P,S, and M) mounted on a central rod.

The protein resides in the periplasm. It localises to the bacterial flagellum basal body. Assembles around the rod to form the L-ring and probably protects the motor/basal body from shearing forces during rotation. This is Flagellar P-ring protein from Sinorhizobium medicae (strain WSM419) (Ensifer medicae).